The primary structure comprises 305 residues: Putative lipid kinase SAR0780 (305 aa).

Positions 3–139 (NKYTHGVLFY…YDVIKINNQY (137 aa)) constitute a DAGKc domain. ATP is bound by residues Ser44, 74-80 (GDGTVNE), and Thr101. Mg(2+)-binding residues include Ser220, Asp223, and Glu225. Catalysis depends on Glu281, which acts as the Proton acceptor.

It belongs to the diacylglycerol/lipid kinase family. It depends on Mg(2+) as a cofactor.

May catalyze the ATP-dependent phosphorylation of lipids other than diacylglycerol (DAG). In fact, is not able to exhibit diacylglycerol kinase activity in vitro. The chain is Putative lipid kinase SAR0780 from Staphylococcus aureus (strain MRSA252).